Consider the following 137-residue polypeptide: Large ribosomal subunit protein eL28 (137 aa).

Position 2 is an N-acetylserine (S2). Residues K58 and K65 each participate in a glycyl lysine isopeptide (Lys-Gly) (interchain with G-Cter in SUMO2) cross-link. S115 bears the Phosphoserine mark.

The protein belongs to the eukaryotic ribosomal protein eL28 family. In terms of assembly, component of the large ribosomal subunit.

It is found in the cytoplasm. In terms of biological role, component of the large ribosomal subunit. The ribosome is a large ribonucleoprotein complex responsible for the synthesis of proteins in the cell. This is Large ribosomal subunit protein eL28 (RPL28) from Oryctolagus cuniculus (Rabbit).